A 91-amino-acid polypeptide reads, in one-letter code: Sec-independent protein translocase protein TatA (91 aa).

The helical transmembrane segment at 1 to 21 threads the bilayer; it reads MGIFDWKHWIVILIVVVLVFG. Residues 42–91 form a disordered region; sequence AMHDDDKPAEQPAPQPQQAQPAPQGSPLNQPHTIDAQAHKVDEPIRKDQV. Residues 51–64 show a composition bias toward low complexity; it reads EQPAPQPQQAQPAP. A compositionally biased stretch (basic and acidic residues) spans 78 to 91; the sequence is QAHKVDEPIRKDQV.

Belongs to the TatA/E family. As to quaternary structure, the Tat system comprises two distinct complexes: a TatABC complex, containing multiple copies of TatA, TatB and TatC subunits, and a separate TatA complex, containing only TatA subunits. Substrates initially bind to the TatABC complex, which probably triggers association of the separate TatA complex to form the active translocon.

Its subcellular location is the cell inner membrane. In terms of biological role, part of the twin-arginine translocation (Tat) system that transports large folded proteins containing a characteristic twin-arginine motif in their signal peptide across membranes. TatA could form the protein-conducting channel of the Tat system. The polypeptide is Sec-independent protein translocase protein TatA (Pseudomonas syringae pv. tomato (strain ATCC BAA-871 / DC3000)).